The sequence spans 313 residues: Olfactory receptor 5H1 (313 aa).

The Extracellular portion of the chain corresponds to 1 to 28 (MEEENATLLTEFVLTGFLYQPQWKIPLF). A glycan (N-linked (GlcNAc...) asparagine) is linked at N5. A helical transmembrane segment spans residues 29–49 (LAFLVIYLITIMGNLGLIAVI). Residues 50 to 56 (WKDPHLH) lie on the Cytoplasmic side of the membrane. A helical transmembrane segment spans residues 57 to 77 (IPMYLLLGNLAFVDAWISSTV). Topologically, residues 78-98 (TPKMLNNFLAKSKMISLSECK) are extracellular. Residues C97 and C179 are joined by a disulfide bond. The helical transmembrane segment at 99–119 (IQFFSFAISVTTECFLLATMA) threads the bilayer. At 120–143 (YDRYVAICKPLLYPAIMTNGLCIR) the chain is on the cytoplasmic side. Residues 144 to 164 (LLILSYVGGILHALIHEGFLF) traverse the membrane as a helical segment. The Extracellular portion of the chain corresponds to 165-195 (RLTFCNSNIVHHIYCDTIPLSKISCTDSSIN). A helical membrane pass occupies residues 196–216 (FLMVFIFSGSIQVFSIVTILV). At 217–240 (SYTFVLFAILKKKSDKGVRKAFST) the chain is on the cytoplasmic side. The helical transmembrane segment at 241-261 (CGAHLFSVSLYYGPLLFIYVG) threads the bilayer. The Extracellular portion of the chain corresponds to 262–271 (PASPQADDQD). The chain crosses the membrane as a helical span at residues 272–292 (MVEPLFYTVIIPLLNPIIYSL). The Cytoplasmic segment spans residues 293–313 (RNKQVTVSFTKMLKKHVKVSY).

It belongs to the G-protein coupled receptor 1 family.

It localises to the cell membrane. Odorant receptor. This chain is Olfactory receptor 5H1 (OR5H1), found in Homo sapiens (Human).